The following is a 554-amino-acid chain: Probable efflux pump gsfJ (554 aa).

14 consecutive transmembrane segments (helical) span residues 54–74, 93–115, 120–140, 152–172, 181–201, 206–226, 248–268, 279–299, 321–341, 349–369, 379–399, 410–430, 447–467, and 518–538; these read LAAV…DNTI, SWYG…GKFY, IKVW…ICAV, AIAG…IGFA, LLGF…LIGG, KCFY…FLLF, LVGA…LQYG, VIGL…WEIY, IYMF…PIYF, PIGS…AAIV, IVPL…GLFY, WVGY…IAMS, IVNF…QCAF, and VFAI…FGSW.

Belongs to the major facilitator superfamily.

It is found in the membrane. Functionally, probable efflux pump; part of the gene cluster that mediates the biosynthesis of griseofulvin. The polypeptide is Probable efflux pump gsfJ (Penicillium aethiopicum).